The sequence spans 328 residues: tRNA uridine(34) hydroxylase (328 aa).

Residues 130–224 form the Rhodanese domain; that stretch reads LDEDTVVLDT…YGKDPEVQGE (95 aa). The active-site Cysteine persulfide intermediate is the cysteine 184.

This sequence belongs to the TrhO family.

The enzyme catalyses uridine(34) in tRNA + AH2 + O2 = 5-hydroxyuridine(34) in tRNA + A + H2O. Functionally, catalyzes oxygen-dependent 5-hydroxyuridine (ho5U) modification at position 34 in tRNAs. This Streptococcus pyogenes serotype M49 (strain NZ131) protein is tRNA uridine(34) hydroxylase.